We begin with the raw amino-acid sequence, 1723 residues long: Lys-gingipain HG66 (1723 aa).

The N-terminal stretch at 1-24 is a signal peptide; the sequence is MRKLLLLIAASLLGVGLYAQNAKI. The propeptide occupies 25–228; sequence KLDAPTTRTT…ETAYKQLFNR (204 aa). Residues Asp313, Asp337, Asp339, Phe341, and Glu343 each coordinate Ca(2+). The Proton donor role is filled by His444. The Nucleophile role is filled by Cys477. The Ca(2+) site is built by Phe482 and Glu491. Residues 965–985 form a disordered region; it reads DAPNGTPNPNPNPNPGTTTLS. Residues Ser987, Glu989, Asp1000, Asp1002, Asp1004, His1006, Ser1021, Gly1023, Asn1042, Asp1145, and Glu1146 each coordinate Ca(2+).

This sequence belongs to the peptidase C25 family. Post-translationally, proteolytically cleaved into a catalytic subunit and three adhesins. Arg-gingipain is involved in this post-translational processing.

The protein localises to the secreted. It catalyses the reaction Endopeptidase with strict specificity for lysyl bonds.. Cysteine proteinase with a strong preference for substrates with Lys in the P1 position. Hydrolyzes bovine hemoglobin, bovine serum albumin, casein, human placental type I collagen and human IgA and IgG. Disrupts the functions of polymorphonuclear leukocytes. May act as a virulence factor in the development of peridontal disease. Involved in the coaggregation of P.gingivalis with other oral bacteria. This chain is Lys-gingipain HG66, found in Porphyromonas gingivalis (Bacteroides gingivalis).